The following is a 280-amino-acid chain: Dehydrogenase/reductase SDR family member 2, mitochondrial (280 aa).

A mitochondrion-targeting transit peptide spans 1 to 23; it reads MLSAVARGYQGWFHPCARLSVRM. Positions 46 and 48 each coordinate NAD(+). K96 carries the N6-acetyllysine; alternate modification. At K96 the chain carries N6-succinyllysine; alternate. Position 172 (S172) interacts with substrate. The NAD(+) site is built by Y185 and K189. The active-site Proton acceptor is the Y185. Position 219 is an N6-acetyllysine; alternate (K219). K219 carries the N6-succinyllysine; alternate modification. An NAD(+)-binding site is contributed by T220. S223 is modified (phosphoserine). K237 is modified (N6-succinyllysine).

It belongs to the short-chain dehydrogenases/reductases (SDR) family. As to quaternary structure, directly interacts with MDM2; this interaction occurs in the nucleus and does not target DHRS2 to degradation. In terms of tissue distribution, widely expressed, with highest levels in liver and kidney, followed by heart, spleen, skeletal muscle and placenta. In hemopoietic cells, expressed in dendritic cells, but not in monocytes, macrophages, granulocytes, nor in B and T lymphocytes.

It is found in the mitochondrion matrix. Its subcellular location is the nucleus. NADPH-dependent oxidoreductase which catalyzes the reduction of dicarbonyl compounds. Displays reductase activity in vitro with 3,4-hexanedione, 2,3-heptanedione and 1-phenyl-1,2-propanedione as substrates. May function as a dicarbonyl reductase in the enzymatic inactivation of reactive carbonyls involved in covalent modification of cellular components. Also displays a minor hydroxysteroid dehydrogenase activity toward bile acids such as ursodeoxycholic acid (UDCA) and isoursodeoxycholic acid (isoUDCA), which makes it unlikely to control hormone levels. Doesn't show any activity in vitro with retinoids and sugars as substrates. Attenuates MDM2-mediated p53/TP53 degradation, leading to p53/TP53 stabilization and increased transcription activity, resulting in the accumulation of MDM2 and CDKN1A/p21. Reduces proliferation, migration and invasion of cancer cells and well as the production of ROS in cancer. The sequence is that of Dehydrogenase/reductase SDR family member 2, mitochondrial from Homo sapiens (Human).